Here is a 1149-residue protein sequence, read N- to C-terminus: Bone sialoprotein-binding protein (1149 aa).

Positions 1-52 are cleaved as a signal peptide; it reads MINRDNKKAITKKGMISNRLNKFSIRKYTVGTASILVGTTLIFGLGNQEAKA. Residues 53–601 are ligand binding A region; the sequence is AENTSTENAK…GDGTVKPEEK (549 aa). Disordered stretches follow at residues 54–249 and 675–697; these read ENTS…TAPT and LPTK…VTVK. A compositionally biased stretch (basic and acidic residues) spans 61-75; the sequence is AKQDEASASDNKEVV. Polar residues predominate over residues 77–89; it reads ETENNSTQKNDLT. Residues 92-106 are compositionally biased toward basic and acidic residues; that stretch reads IKKETNTDSHQEAKE. Residues 109-126 are compositionally biased toward low complexity; the sequence is TTSSTQQQQNNATTSTET. The segment covering 130 to 145 has biased composition (basic and acidic residues); sequence NIEKENVKPSTDKTAT. Residues 158–205 are compositionally biased toward polar residues; the sequence is PNNTNNDVTTKPSTSEIQTTPTTPQESTNIENSQPQPTPSKVDNQVTD. Positions 216–241 are enriched in basic and acidic residues; it reads SKEELKNNPEKLKELVRNDSNTDRST. 3 CNA-B domains span residues 602–714, 715–824, and 825–935; these read LYKI…YKEP, KYNL…YKTP, and KYSL…EEDT. Residues 896–1124 are disordered; that stretch reads TQTGTNTTED…TGSENNGSNN (229 aa). 2 stretches are compositionally biased toward acidic residues: residues 903-913 and 930-1088; these read TEDDKDADGGE and YFEE…DSDS. The LPXTG sorting signal signature appears at 1112-1116; it reads LPETG. Pentaglycyl murein peptidoglycan amidated threonine is present on T1115. A propeptide spans 1116–1149 (removed by sortase); it reads GSENNGSNNATLFGGLFAALGSLLLFGRRKKQNK.

Belongs to the serine-aspartate repeat-containing protein (SDr) family.

It is found in the secreted. It localises to the cell wall. Functionally, specifically interacts with bone sialoprotein (BSP), a glycoprotein of bone and dentin extracellular matrix. Could contribute to staphylococcal osteomyelitis and arthritis. The polypeptide is Bone sialoprotein-binding protein (bbp) (Staphylococcus aureus).